The sequence spans 389 residues: tRNA-specific 2-thiouridylase MnmA (389 aa).

ATP is bound by residues 21 to 28 and Leu47; that span reads AMSGGVDS. Cys115 serves as the catalytic Nucleophile. Cys115 and Cys212 are joined by a disulfide. Gly139 contacts ATP. Residues 162 to 164 form an interaction with tRNA region; that stretch reads RDQ. Cys212 acts as the Cysteine persulfide intermediate in catalysis.

Belongs to the MnmA/TRMU family.

The protein resides in the cytoplasm. It carries out the reaction S-sulfanyl-L-cysteinyl-[protein] + uridine(34) in tRNA + AH2 + ATP = 2-thiouridine(34) in tRNA + L-cysteinyl-[protein] + A + AMP + diphosphate + H(+). Catalyzes the 2-thiolation of uridine at the wobble position (U34) of tRNA, leading to the formation of s(2)U34. The sequence is that of tRNA-specific 2-thiouridylase MnmA from Xanthobacter autotrophicus (strain ATCC BAA-1158 / Py2).